A 309-amino-acid polypeptide reads, in one-letter code: Shugoshin (309 aa).

A coiled-coil region spans residues 42–77 (NLLLKQQVVQCTKTIEKLRNENVALRQKNQELIDGT). Disordered regions lie at residues 165-195 (FDNN…KGRR) and 210-309 (EEAS…NTFF). The span at 167–178 (NNSSQSTSSIQN) shows a compositional bias: low complexity. The segment covering 184 to 193 (PRKKQSVGKG) has biased composition (basic residues).

The protein belongs to the shugoshin family. In terms of tissue distribution, expressed in gonads.

It localises to the nucleus. It is found in the chromosome. Its subcellular location is the centromere. In terms of biological role, component of cell cycle checkpoints, which ensures chromosome segregation during meiosis and mitosis. During meiotic prophase, it is involved in the regulation of the synapsis checkpoint, which monitors whether homologous chromosomes have synapsed, and the DNA damage response. Plays a central role in chromosome cohesion during cell division by preventing premature dissociation of cohesin complex after prophase, when most of cohesin complex dissociates from chromosomes arms. This Caenorhabditis elegans protein is Shugoshin.